The chain runs to 1025 residues: Multidrug resistance protein MdtC (1025 aa).

12 consecutive transmembrane segments (helical) span residues Phe-3–Leu-23, Glu-333–Leu-353, Ile-360–Cys-380, Leu-387–Leu-407, Val-431–Leu-451, Phe-463–Pro-483, Leu-528–Pro-548, Val-853–Ser-873, Val-875–Leu-895, Leu-897–Val-917, Pro-953–Gly-973, and Ile-984–Val-1004.

Belongs to the resistance-nodulation-cell division (RND) (TC 2.A.6) family. MdtC subfamily. As to quaternary structure, part of a tripartite efflux system composed of MdtA, MdtB and MdtC. MdtC forms a heteromultimer with MdtB.

The protein resides in the cell inner membrane. In terms of biological role, the MdtABC tripartite complex confers resistance against novobiocin and deoxycholate. The sequence is that of Multidrug resistance protein MdtC from Escherichia coli O139:H28 (strain E24377A / ETEC).